The following is a 92-amino-acid chain: Small ribosomal subunit protein uS19 (92 aa).

It belongs to the universal ribosomal protein uS19 family.

Functionally, protein S19 forms a complex with S13 that binds strongly to the 16S ribosomal RNA. This Lactococcus lactis subsp. cremoris (strain MG1363) protein is Small ribosomal subunit protein uS19.